The chain runs to 592 residues: MMTHAGVLGTRFTVWAPNARGVRVCGNFCRWDGAAFPMRSLGSSGVWELFVPGIGEGELYKFEITRPDGTHTVRADPMARRAEVPPATASIVTESSYAWADGAWMAARGERPVHESPFSVYEVHLPSWRPGLTYRQLAEQLPAYVADLGFTHVELLPVAEHPFGGSWGYQVTGFYAPTARLGTPDDFKYLVDALHRAGVGVLMDWVPAHFPRDDWALAEFDGRPLYEPEDPQRAAHPDWGTLEFDYGRKEVRNFLVANAVYWCEEFHIDGLRVDAVASMLYLDYSREEGQWSPNEFGGRDNPDAVAFLQEMNATLYRRVPGVITIAEESTAWDGVTRATHDNGLGFGLKWNMGWMHDSLGYVQHEPVHRKYHHHEMTFSMVYAYSENYVLPISHDEVVHGKQALVSKMPGDWWQRRANHRAYLGFMWAHPGKQLLFMGQEFAQGAEWSPEHGPEWWLLDDEYHSAGDHRGMRDLVRDLNTLYRAEPALWERDTDPSGFAWVVGDAAEDNVFAFLRHAADGTPLLAVSNFSPVVRHDYRLGVPDDIPAWQEALNTDAARYGGSDLICPDPVKPESGEIRLTLPPLATVWLRPA.

Asp-274 (nucleophile) is an active-site residue. Glu-327 serves as the catalytic Proton donor.

This sequence belongs to the glycosyl hydrolase 13 family. GlgB subfamily. Monomer.

The enzyme catalyses Transfers a segment of a (1-&gt;4)-alpha-D-glucan chain to a primary hydroxy group in a similar glucan chain.. It functions in the pathway glycan biosynthesis; glycogen biosynthesis. Its function is as follows. Catalyzes the formation of the alpha-1,6-glucosidic linkages in glycogen by scission of a 1,4-alpha-linked oligosaccharide from growing alpha-1,4-glucan chains and the subsequent attachment of the oligosaccharide to the alpha-1,6 position. The sequence is that of 1,4-alpha-glucan branching enzyme GlgB 2 from Streptomyces avermitilis (strain ATCC 31267 / DSM 46492 / JCM 5070 / NBRC 14893 / NCIMB 12804 / NRRL 8165 / MA-4680).